Consider the following 346-residue polypeptide: Phosphoribosylformylglycinamidine cyclo-ligase (346 aa).

This sequence belongs to the AIR synthase family.

Its subcellular location is the cytoplasm. The enzyme catalyses 2-formamido-N(1)-(5-O-phospho-beta-D-ribosyl)acetamidine + ATP = 5-amino-1-(5-phospho-beta-D-ribosyl)imidazole + ADP + phosphate + H(+). It functions in the pathway purine metabolism; IMP biosynthesis via de novo pathway; 5-amino-1-(5-phospho-D-ribosyl)imidazole from N(2)-formyl-N(1)-(5-phospho-D-ribosyl)glycinamide: step 2/2. The chain is Phosphoribosylformylglycinamidine cyclo-ligase from Synechococcus sp. (strain CC9311).